A 632-amino-acid polypeptide reads, in one-letter code: Gamma-aminobutyric acid receptor subunit theta (632 aa).

The signal sequence occupies residues 1 to 21 (MGIRGMLRAAVILLLIRTWLA). Residues 22 to 268 (EGNYPSPIPK…FQVQREVNSY (247 aa)) are Extracellular-facing. Residue N127 is glycosylated (N-linked (GlcNAc...) asparagine). C183 and C197 are joined by a disulfide. A helical membrane pass occupies residues 269–289 (LVQVYWPTVLTTITSWISFWM). Residues 290–297 (NYDSSAAR) are Cytoplasmic-facing. The chain crosses the membrane as a helical span at residues 298 to 315 (VTIGLTSMLILTTIDSHL). At 316 to 326 (RDKLPNISCIK) the chain is on the extracellular side. A helical membrane pass occupies residues 327–347 (AIDIYILVCLFFVFLSLLEYV). Topologically, residues 348-611 (YINYLFYSRG…DYVPKVDKWS (264 aa)) are cytoplasmic. Disordered stretches follow at residues 410-458 (SPES…STSE) and 491-523 (HGVT…LHHG). The span at 413 to 425 (SLGSLTSTSEQAQ) shows a compositional bias: polar residues. Positions 426 to 439 (LATSESLSPLTSLS) are enriched in low complexity. Over residues 448–458 (ESLSDLPSTSE) the composition is skewed to polar residues. Residues 491 to 511 (HGVTHDHEDSNESLSSDERHG) show a composition bias toward basic and acidic residues. A helical transmembrane segment spans residues 612–632 (RFLFPLAFGLFNIVYWVYHMY).

It belongs to the ligand-gated ion channel (TC 1.A.9) family. Gamma-aminobutyric acid receptor (TC 1.A.9.5) subfamily. GABRQ sub-subfamily. Heteropentamer, formed by a combination of alpha (GABRA1-6), beta (GABRB1-3), gamma (GABRG1-3), delta (GABRD), epsilon (GABRE), rho (GABRR1-3), pi (GABRP) and theta (GABRQ) chains, each subunit exhibiting distinct physiological and pharmacological properties. Expressed in brain.

Its subcellular location is the postsynaptic cell membrane. The protein localises to the cell membrane. It catalyses the reaction chloride(in) = chloride(out). With respect to regulation, potentiated by etomidate, propofol, pregnanolone and pentobarbital. Its function is as follows. Theta subunit of the heteropentameric ligand-gated chloride channel gated by gamma-aminobutyric acid (GABA), a major inhibitory neurotransmitter in the brain. GABA-gated chloride channels, also named GABA(A) receptors (GABAAR), consist of five subunits arranged around a central pore and contain GABA active binding site(s) located at the alpha and beta subunit interfaces. When activated by GABA, GABAARs selectively allow the flow of chloride anions across the cell membrane down their electrochemical gradient. The chain is Gamma-aminobutyric acid receptor subunit theta from Homo sapiens (Human).